Reading from the N-terminus, the 869-residue chain is Probable beta-glucosidase F (869 aa).

An N-terminal signal peptide occupies residues methionine 1–serine 19. Residues asparagine 69, asparagine 77, and asparagine 261 are each glycosylated (N-linked (GlcNAc...) asparagine). The active site involves aspartate 289. N-linked (GlcNAc...) asparagine glycosylation is found at asparagine 332, asparagine 364, asparagine 399, asparagine 425, and asparagine 478. A disordered region spans residues alanine 678 to asparagine 698. Pro residues predominate over residues proline 681 to threonine 691. A glycan (N-linked (GlcNAc...) asparagine) is linked at asparagine 728.

This sequence belongs to the glycosyl hydrolase 3 family.

Its subcellular location is the secreted. The catalysed reaction is Hydrolysis of terminal, non-reducing beta-D-glucosyl residues with release of beta-D-glucose.. It functions in the pathway glycan metabolism; cellulose degradation. Functionally, beta-glucosidases are one of a number of cellulolytic enzymes involved in the degradation of cellulosic biomass. Catalyzes the last step releasing glucose from the inhibitory cellobiose. The sequence is that of Probable beta-glucosidase F (bglF) from Neosartorya fischeri (strain ATCC 1020 / DSM 3700 / CBS 544.65 / FGSC A1164 / JCM 1740 / NRRL 181 / WB 181) (Aspergillus fischerianus).